The chain runs to 760 residues: ATP-dependent zinc metalloprotease FtsH (760 aa).

Residues 1–5 (MNRKN) lie on the Cytoplasmic side of the membrane. The helical transmembrane segment at 6-26 (VTRTITAIAVVVLLGWSFFYF) threads the bilayer. The Extracellular segment spans residues 27 to 110 (SDDTRGYKPV…KVSTVVNQGS (84 aa)). The helical transmembrane segment at 111–131 (ILGELLVYVLPLLLLVGLFVM) threads the bilayer. Residues 132–760 (FSRMQGGARM…EVSRTKPAHG (629 aa)) lie on the Cytoplasmic side of the membrane. An ATP-binding site is contributed by 203-210 (GPPGTGKT). His-425 serves as a coordination point for Zn(2+). Residue Glu-426 is part of the active site. Residues His-429 and Asp-501 each coordinate Zn(2+). The segment at 616-760 (DFGGRIPSDK…EVSRTKPAHG (145 aa)) is disordered. Residues 650–669 (AFKAAIAQATQAAEAARSDA) are compositionally biased toward low complexity. Acidic residues predominate over residues 740 to 750 (GSDESSAEQDD).

In the central section; belongs to the AAA ATPase family. It in the C-terminal section; belongs to the peptidase M41 family. As to quaternary structure, homohexamer. It depends on Zn(2+) as a cofactor.

The protein localises to the cell membrane. In terms of biological role, acts as a processive, ATP-dependent zinc metallopeptidase for both cytoplasmic and membrane proteins. Plays a role in the quality control of integral membrane proteins. The sequence is that of ATP-dependent zinc metalloprotease FtsH from Mycobacterium tuberculosis (strain CDC 1551 / Oshkosh).